Reading from the N-terminus, the 244-residue chain is MKIIISPAKTFKIRKLKKENIDCLFENKKNALVSIMKEKSIEELKSMWKCSDKIAEESYKLYKNFDVSPKGCAIRSFDGIQYQYMDVDSLDEDKLEYLEEHLRILSGLYGILRPFDQISKYRLDFEDKFINLYEFWEDEIRNHFEGEEIIDLASKEYGQNIYKYLDKAPVKIEFKEEVLIDGDIKLKTKATPSKILRGRMVNYMARNHIENIEQLKKFSCDGYNYSEKNSDKKKLVFVKSLVSE.

It belongs to the UPF0246 family.

In Finegoldia magna (strain ATCC 29328 / DSM 20472 / WAL 2508) (Peptostreptococcus magnus), this protein is UPF0246 protein FMG_1068.